Consider the following 374-residue polypeptide: Chaperone protein DnaJ (374 aa).

The J domain maps to 5-69 (NYYQILGVSK…QKRAAYDRLG (65 aa)). The CR-type zinc finger occupies 137 to 215 (GIEKNISFSS…CHGMGRYHKQ (79 aa)). Positions 150, 153, 167, 170, 189, 192, 203, and 206 each coordinate Zn(2+). CXXCXGXG motif repeat units lie at residues 150-157 (CDTCHGSG), 167-174 (CDACSGVG), 189-196 (CHKCQGNG), and 203-210 (CKKCHGMG).

The protein belongs to the DnaJ family. In terms of assembly, homodimer. The cofactor is Zn(2+).

The protein resides in the cytoplasm. In terms of biological role, participates actively in the response to hyperosmotic and heat shock by preventing the aggregation of stress-denatured proteins and by disaggregating proteins, also in an autonomous, DnaK-independent fashion. Unfolded proteins bind initially to DnaJ; upon interaction with the DnaJ-bound protein, DnaK hydrolyzes its bound ATP, resulting in the formation of a stable complex. GrpE releases ADP from DnaK; ATP binding to DnaK triggers the release of the substrate protein, thus completing the reaction cycle. Several rounds of ATP-dependent interactions between DnaJ, DnaK and GrpE are required for fully efficient folding. Also involved, together with DnaK and GrpE, in the DNA replication of plasmids through activation of initiation proteins. This Rickettsia massiliae (strain Mtu5) protein is Chaperone protein DnaJ.